The chain runs to 249 residues: MIT domain-containing protein 1 (249 aa).

The region spanning 8–86 is the MIT domain; that stretch reads QDPQSTAAAT…KYLDQEKEDG (79 aa). The interval 168–231 is important for association with membranes; it reads RGLQEIEESL…SLGYCDFDLR (64 aa).

In terms of assembly, homodimer. Interacts (via MIT domain) with CHMP1A, CHMP1B, CHMP2A and IST1.

Its subcellular location is the late endosome membrane. It is found in the midbody. The protein localises to the membrane. Functionally, required for efficient abscission at the end of cytokinesis, together with components of the ESCRT-III complex. The sequence is that of MIT domain-containing protein 1 (MITD1) from Homo sapiens (Human).